A 333-amino-acid polypeptide reads, in one-letter code: Probable tRNA pseudouridine synthase B (333 aa).

Asp66 functions as the Nucleophile in the catalytic mechanism. Positions 233–308 (LKKIIVKDSA…EVVEITRVIM (76 aa)) constitute a PUA domain.

This sequence belongs to the pseudouridine synthase TruB family. Type 2 subfamily.

The catalysed reaction is uridine(55) in tRNA = pseudouridine(55) in tRNA. Its function is as follows. Could be responsible for synthesis of pseudouridine from uracil-55 in the psi GC loop of transfer RNAs. This chain is Probable tRNA pseudouridine synthase B, found in Methanococcus maripaludis (strain C7 / ATCC BAA-1331).